Reading from the N-terminus, the 616-residue chain is Dihydroxy-acid dehydratase (616 aa).

Residue D81 coordinates Mg(2+). Position 122 (C122) interacts with [2Fe-2S] cluster. Residues D123 and K124 each coordinate Mg(2+). K124 bears the N6-carboxylysine mark. Residue C195 coordinates [2Fe-2S] cluster. E491 serves as a coordination point for Mg(2+). Catalysis depends on S517, which acts as the Proton acceptor.

The protein belongs to the IlvD/Edd family. Homodimer. Requires [2Fe-2S] cluster as cofactor. It depends on Mg(2+) as a cofactor.

It carries out the reaction (2R)-2,3-dihydroxy-3-methylbutanoate = 3-methyl-2-oxobutanoate + H2O. The enzyme catalyses (2R,3R)-2,3-dihydroxy-3-methylpentanoate = (S)-3-methyl-2-oxopentanoate + H2O. The protein operates within amino-acid biosynthesis; L-isoleucine biosynthesis; L-isoleucine from 2-oxobutanoate: step 3/4. It functions in the pathway amino-acid biosynthesis; L-valine biosynthesis; L-valine from pyruvate: step 3/4. In terms of biological role, functions in the biosynthesis of branched-chain amino acids. Catalyzes the dehydration of (2R,3R)-2,3-dihydroxy-3-methylpentanoate (2,3-dihydroxy-3-methylvalerate) into 2-oxo-3-methylpentanoate (2-oxo-3-methylvalerate) and of (2R)-2,3-dihydroxy-3-methylbutanoate (2,3-dihydroxyisovalerate) into 2-oxo-3-methylbutanoate (2-oxoisovalerate), the penultimate precursor to L-isoleucine and L-valine, respectively. In Pectobacterium atrosepticum (strain SCRI 1043 / ATCC BAA-672) (Erwinia carotovora subsp. atroseptica), this protein is Dihydroxy-acid dehydratase.